The following is a 292-amino-acid chain: MSLNVKQSRIAILFSSCLISISFFSQANTKGIDEIKNLETDFNGRIGVYALDTGSGKSFSYRANERFPLCSSFKGFLAAAVLKGSQDNRLNLNQIVNYNTRSLEFHSPITTKYKDNGMSLGDMAAAALQYSDNGATNIILERYIGGPEGMTKFMRSIGDEDFRLDRWELDLNTAIPGDERDTSTPAAVAKSLKTLALGNILSEHEKETYQTWLKGNTTGAARIRASVPSDWVVGDKTGSCGAYGTANDYAVVWPKNRAPLIISVYTTKNEKEAKHEDKVIAEASRIAIDNLK.

An N-terminal signal peptide occupies residues Met1–Ala27. A disulfide bridge connects residues Cys70 and Cys240. Ser71 functions as the Acyl-ester intermediate in the catalytic mechanism. Lys236–Gly238 lines the substrate pocket.

It belongs to the class-A beta-lactamase family.

It carries out the reaction a beta-lactam + H2O = a substituted beta-amino acid. In terms of biological role, hydrolyzes carbapenems such as imipenem, which are extended-spectrum beta-lactam antibiotics. The protein is Imipenem-hydrolyzing beta-lactamase (nmcA) of Enterobacter cloacae.